We begin with the raw amino-acid sequence, 20 residues long: Alpha-amylase (20 aa).

It catalyses the reaction Endohydrolysis of (1-&gt;4)-alpha-D-glucosidic linkages in polysaccharides containing three or more (1-&gt;4)-alpha-linked D-glucose units.. With respect to regulation, strongly inhibited by Hg (2+). Inhibited by Zn (2+). Activated by Fe (2+), Mg (2+) and Ba (2+). Its function is as follows. Alpha-amylase active towards amylose, starch, amylopectin and maltodextrins. Has lower activity towards glycogen, and is not active towards alpha/beta-cyclodextrin. This chain is Alpha-amylase, found in Bacillus sp.